Consider the following 55-residue polypeptide: MPALKSHVRPNSAAPARRQPWPCGSCVTAPVAVRIGAMGASPGPARRPHHRGCRA.

The interval 1 to 22 (MPALKSHVRPNSAAPARRQPWP) is disordered.

This is an uncharacterized protein from Rhodobacter capsulatus (Rhodopseudomonas capsulata).